The following is a 495-amino-acid chain: Cobyric acid synthase (495 aa).

One can recognise a GATase cobBQ-type domain in the interval 249 to 442 (KFIVKVPVVT…LHGVFDEPEA (194 aa)). Residue Cys-330 is the Nucleophile of the active site. The active site involves His-434.

The protein belongs to the CobB/CobQ family. CobQ subfamily.

The protein operates within cofactor biosynthesis; adenosylcobalamin biosynthesis. Catalyzes amidations at positions B, D, E, and G on adenosylcobyrinic A,C-diamide. NH(2) groups are provided by glutamine, and one molecule of ATP is hydrogenolyzed for each amidation. This chain is Cobyric acid synthase, found in Aliivibrio fischeri (strain ATCC 700601 / ES114) (Vibrio fischeri).